The primary structure comprises 345 residues: S-adenosylmethionine:tRNA ribosyltransferase-isomerase (345 aa).

The protein belongs to the QueA family. As to quaternary structure, monomer.

It localises to the cytoplasm. It catalyses the reaction 7-aminomethyl-7-carbaguanosine(34) in tRNA + S-adenosyl-L-methionine = epoxyqueuosine(34) in tRNA + adenine + L-methionine + 2 H(+). Its pathway is tRNA modification; tRNA-queuosine biosynthesis. Its function is as follows. Transfers and isomerizes the ribose moiety from AdoMet to the 7-aminomethyl group of 7-deazaguanine (preQ1-tRNA) to give epoxyqueuosine (oQ-tRNA). The polypeptide is S-adenosylmethionine:tRNA ribosyltransferase-isomerase (Shewanella woodyi (strain ATCC 51908 / MS32)).